Reading from the N-terminus, the 558-residue chain is Oxygen-dependent choline dehydrogenase (558 aa).

4–33 contacts FAD; the sequence is DYIIIGAGSAGNVLATRLTEDSDTTVLLLE. H473 acts as the Proton acceptor in catalysis.

The protein belongs to the GMC oxidoreductase family. Requires FAD as cofactor.

The enzyme catalyses choline + A = betaine aldehyde + AH2. It catalyses the reaction betaine aldehyde + NAD(+) + H2O = glycine betaine + NADH + 2 H(+). Its pathway is amine and polyamine biosynthesis; betaine biosynthesis via choline pathway; betaine aldehyde from choline (cytochrome c reductase route): step 1/1. In terms of biological role, involved in the biosynthesis of the osmoprotectant glycine betaine. Catalyzes the oxidation of choline to betaine aldehyde and betaine aldehyde to glycine betaine at the same rate. The protein is Oxygen-dependent choline dehydrogenase of Citrobacter koseri (strain ATCC BAA-895 / CDC 4225-83 / SGSC4696).